A 111-amino-acid polypeptide reads, in one-letter code: Cell cycle protein GpsB (111 aa).

The stretch at 38-72 (IKDYEAFHKEFEQLKQQNARLKRELEEQKLAVTQV) forms a coiled coil.

The protein belongs to the GpsB family. Forms polymers through the coiled coil domains. Interacts with PBP1, MreC and EzrA.

It localises to the cytoplasm. Its function is as follows. Divisome component that associates with the complex late in its assembly, after the Z-ring is formed, and is dependent on DivIC and PBP2B for its recruitment to the divisome. Together with EzrA, is a key component of the system that regulates PBP1 localization during cell cycle progression. Its main role could be the removal of PBP1 from the cell pole after pole maturation is completed. Also contributes to the recruitment of PBP1 to the division complex. Not essential for septum formation. This Bacillus cereus (strain G9842) protein is Cell cycle protein GpsB.